A 419-amino-acid polypeptide reads, in one-letter code: UDP-N-acetylglucosamine 1-carboxyvinyltransferase (419 aa).

Residue 22–23 coordinates phosphoenolpyruvate; the sequence is KN. R93 contacts UDP-N-acetyl-alpha-D-glucosamine. The active-site Proton donor is the C117. C117 carries the post-translational modification 2-(S-cysteinyl)pyruvic acid O-phosphothioketal. D307 and I329 together coordinate UDP-N-acetyl-alpha-D-glucosamine.

Belongs to the EPSP synthase family. MurA subfamily.

It localises to the cytoplasm. It catalyses the reaction phosphoenolpyruvate + UDP-N-acetyl-alpha-D-glucosamine = UDP-N-acetyl-3-O-(1-carboxyvinyl)-alpha-D-glucosamine + phosphate. It participates in cell wall biogenesis; peptidoglycan biosynthesis. In terms of biological role, cell wall formation. Adds enolpyruvyl to UDP-N-acetylglucosamine. The polypeptide is UDP-N-acetylglucosamine 1-carboxyvinyltransferase (Shewanella sp. (strain MR-7)).